Here is a 184-residue protein sequence, read N- to C-terminus: ATP synthase subunit delta (184 aa).

The protein belongs to the ATPase delta chain family. As to quaternary structure, F-type ATPases have 2 components, F(1) - the catalytic core - and F(0) - the membrane proton channel. F(1) has five subunits: alpha(3), beta(3), gamma(1), delta(1), epsilon(1). CF(0) has four main subunits: a(1), b(1), b'(1) and c(10-14). The alpha and beta chains form an alternating ring which encloses part of the gamma chain. F(1) is attached to F(0) by a central stalk formed by the gamma and epsilon chains, while a peripheral stalk is formed by the delta, b and b' chains.

The protein localises to the cell inner membrane. Its function is as follows. F(1)F(0) ATP synthase produces ATP from ADP in the presence of a proton or sodium gradient. F-type ATPases consist of two structural domains, F(1) containing the extramembraneous catalytic core and F(0) containing the membrane proton channel, linked together by a central stalk and a peripheral stalk. During catalysis, ATP synthesis in the catalytic domain of F(1) is coupled via a rotary mechanism of the central stalk subunits to proton translocation. In terms of biological role, this protein is part of the stalk that links CF(0) to CF(1). It either transmits conformational changes from CF(0) to CF(1) or is implicated in proton conduction. The polypeptide is ATP synthase subunit delta (Erythrobacter litoralis (strain HTCC2594)).